The sequence spans 210 residues: Sortase A (210 aa).

The Cytoplasmic portion of the chain corresponds to 1 to 5; the sequence is MNKQR. Residues 6 to 26 traverse the membrane as a helical segment; it reads IYSIVAILLFVVGGVLIGKPF. Residues 27–210 are Extracellular-facing; sequence YDGYQAEKKQ…GDLVGTKAKK (184 aa). Catalysis depends on His-126, which acts as the Proton donor/acceptor. Cys-187 serves as the catalytic Acyl-thioester intermediate.

This sequence belongs to the bacterial sortase family. Class A subfamily.

Its subcellular location is the cell membrane. With respect to regulation, inhibited by thiol-reactive reagents. Transpeptidase that anchors surface proteins to the cell wall. Recognizes and modifies its substrate by proteolytic cleavage of a C-terminal sorting signal. Following cleavage, a covalent intermediate is formed via a thioester bond between the sortase and its substrate, which is then transferred and covalently attached to the cell wall. This sortase recognizes a Leu-Pro-x-Thr-Gly (LPXTG) motif, which is cleaved by the sortase between the threonine and glycine residues. Important for growth in macrophages. May be critical in the early stages of inhalation anthrax. The sequence is that of Sortase A from Bacillus anthracis.